Here is a 175-residue protein sequence, read N- to C-terminus: Disulfide bond formation protein B (175 aa).

The Cytoplasmic portion of the chain corresponds to 1-13; the sequence is MSKLVTFSQQRSA. The chain crosses the membrane as a helical span at residues 14–30; sequence WLILMFSALGLEASALY. The Periplasmic portion of the chain corresponds to 31 to 48; it reads FQYVMLLDPCVMCIYIRV. Cys-40 and Cys-43 are oxidised to a cystine. Residues 49–64 form a helical membrane-spanning segment; it reads AVLGLILAGLVGSIAP. Residues 65–71 are Cytoplasmic-facing; it reads RFWIVRF. A helical membrane pass occupies residues 72–89; sequence LGMSLWGVSSAWGAKLSF. Residues 90–144 lie on the Periplasmic side of the membrane; sequence ELYQMQANPSPFSTCSFYPEFPTWMPLDAWMPSIFMPTGMCSDIPWTMMSLSMTQ. Cys-104 and Cys-130 are oxidised to a cystine. Residues 145–163 form a helical membrane-spanning segment; that stretch reads WTLIAFVGYSIAFLLFIYP. The Cytoplasmic segment spans residues 164-175; that stretch reads GLLYKKPTNPYS.

It belongs to the DsbB family.

It is found in the cell inner membrane. Functionally, required for disulfide bond formation in some periplasmic proteins. Acts by oxidizing the DsbA protein. This Shewanella denitrificans (strain OS217 / ATCC BAA-1090 / DSM 15013) protein is Disulfide bond formation protein B.